A 75-amino-acid polypeptide reads, in one-letter code: Translational regulator CsrA (75 aa).

The protein belongs to the CsrA/RsmA family. As to quaternary structure, homodimer; the beta-strands of each monomer intercalate to form a hydrophobic core, while the alpha-helices form wings that extend away from the core.

The protein resides in the cytoplasm. A translational regulator that binds mRNA to regulate translation initiation and/or mRNA stability. Usually binds in the 5'-UTR at or near the Shine-Dalgarno sequence preventing ribosome-binding, thus repressing translation. Its main target seems to be the major flagellin gene, while its function is anatagonized by FliW. The polypeptide is Translational regulator CsrA (Thermosipho melanesiensis (strain DSM 12029 / CIP 104789 / BI429)).